A 1104-amino-acid chain; its full sequence is Translation initiation factor IF-2 (1104 aa).

2 disordered regions span residues 51–444 and 461–497; these read SLLG…LAAQ and LARP…RRRA. Low complexity-rich tracts occupy residues 60 to 119 and 127 to 164; these read AKPA…KPQA and ATPK…AAKP. The span at 189 to 202 shows a compositional bias: pro residues; it reads APTPRPTPARPTPR. Low complexity-rich tracts occupy residues 203 to 215, 227 to 246, 311 to 336, and 366 to 396; these read PAGA…PTPG, GAPS…KPGA, STTG…PAGM, and PTKA…SFRP. The span at 406 to 420 shows a compositional bias: basic and acidic residues; the sequence is GRPDWDDSARLDALR. Over residues 481–495 the composition is skewed to basic residues; that stretch reads MRKRKKETARQRQRR. The tr-type G domain occupies 596 to 768; it reads RRPPVVTVMG…LLLVTEVEDL (173 aa). The G1 stretch occupies residues 605-612; the sequence is GHVDHGKT. 605 to 612 contacts GTP; the sequence is GHVDHGKT. The tract at residues 630 to 634 is G2; that stretch reads GITQH. The G3 stretch occupies residues 655–658; it reads DTPG. GTP-binding positions include 655 to 659 and 709 to 712; these read DTPGH and NKID. A G4 region spans residues 709-712; the sequence is NKID. A G5 region spans residues 745-747; sequence SAI.

It belongs to the TRAFAC class translation factor GTPase superfamily. Classic translation factor GTPase family. IF-2 subfamily.

The protein localises to the cytoplasm. In terms of biological role, one of the essential components for the initiation of protein synthesis. Protects formylmethionyl-tRNA from spontaneous hydrolysis and promotes its binding to the 30S ribosomal subunits. Also involved in the hydrolysis of GTP during the formation of the 70S ribosomal complex. The sequence is that of Translation initiation factor IF-2 from Synechococcus sp. (strain CC9605).